We begin with the raw amino-acid sequence, 236 residues long: UPF0502 protein Bamb_4889 (236 aa).

It belongs to the UPF0502 family.

This is UPF0502 protein Bamb_4889 from Burkholderia ambifaria (strain ATCC BAA-244 / DSM 16087 / CCUG 44356 / LMG 19182 / AMMD) (Burkholderia cepacia (strain AMMD)).